The following is a 251-amino-acid chain: MNLNSIPAFQDNYIWVLTNDEGRCVIVDPGEAAPVLKAIAEHKWMPEAIFLTHHHHDHVGGVKELLQHFPQMTVYGPAETQDKGATHLVGDGDTIRVLGEKFTLFATPGHTLGHVCYFSHPYLFCGDTLFSGGCGRLFEGTPSQMYQSLMKINSLPDDTLICSAHEYTLANIKFALSILPHDSFINEYYRKVKELRVKKQMTLPVILKNERKINLFLRTEDIDLINEINKETILQQPEARFAWLRSKKDTF.

Zn(2+) is bound by residues His-53, His-55, Asp-57, His-58, His-110, Asp-127, and His-165.

Belongs to the metallo-beta-lactamase superfamily. Glyoxalase II family. In terms of assembly, monomer. Zn(2+) is required as a cofactor.

The catalysed reaction is an S-(2-hydroxyacyl)glutathione + H2O = a 2-hydroxy carboxylate + glutathione + H(+). It functions in the pathway secondary metabolite metabolism; methylglyoxal degradation; (R)-lactate from methylglyoxal: step 2/2. Its function is as follows. Thiolesterase that catalyzes the hydrolysis of S-D-lactoyl-glutathione to form glutathione and D-lactic acid. The sequence is that of Hydroxyacylglutathione hydrolase from Salmonella dublin (strain CT_02021853).